The chain runs to 251 residues: Triosephosphate isomerase (251 aa).

Position 12 to 14 (12 to 14) interacts with substrate; it reads NWK. His-98 acts as the Electrophile in catalysis. Glu-168 (proton acceptor) is an active-site residue. Substrate contacts are provided by residues Gly-174, Ser-213, and 234-235; that span reads GG.

The protein belongs to the triosephosphate isomerase family. In terms of assembly, homodimer.

It localises to the cytoplasm. The enzyme catalyses D-glyceraldehyde 3-phosphate = dihydroxyacetone phosphate. It functions in the pathway carbohydrate biosynthesis; gluconeogenesis. It participates in carbohydrate degradation; glycolysis; D-glyceraldehyde 3-phosphate from glycerone phosphate: step 1/1. Its function is as follows. Involved in the gluconeogenesis. Catalyzes stereospecifically the conversion of dihydroxyacetone phosphate (DHAP) to D-glyceraldehyde-3-phosphate (G3P). This Bradyrhizobium diazoefficiens (strain JCM 10833 / BCRC 13528 / IAM 13628 / NBRC 14792 / USDA 110) protein is Triosephosphate isomerase.